The chain runs to 310 residues: Methionyl-tRNA formyltransferase (310 aa).

(6S)-5,6,7,8-tetrahydrofolate is bound at residue serine 106–proline 109.

The protein belongs to the Fmt family.

The catalysed reaction is L-methionyl-tRNA(fMet) + (6R)-10-formyltetrahydrofolate = N-formyl-L-methionyl-tRNA(fMet) + (6S)-5,6,7,8-tetrahydrofolate + H(+). In terms of biological role, attaches a formyl group to the free amino group of methionyl-tRNA(fMet). The formyl group appears to play a dual role in the initiator identity of N-formylmethionyl-tRNA by promoting its recognition by IF2 and preventing the misappropriation of this tRNA by the elongation apparatus. This chain is Methionyl-tRNA formyltransferase, found in Fervidobacterium nodosum (strain ATCC 35602 / DSM 5306 / Rt17-B1).